The chain runs to 744 residues: Catalase-peroxidase (744 aa).

Residues 1–21 (MANESKCPFHQTAGGGTSNRD) form a disordered region. A cross-link (tryptophyl-tyrosyl-methioninium (Trp-Tyr) (with M-267)) is located at residues 91-241 (WHSAGTYRIG…LAAVQMGLIY (151 aa)). The active-site Proton acceptor is His-92. Positions 241–267 (YVNPEGPEGNPDPVASGKDIRDTFGRM) form a cross-link, tryptophyl-tyrosyl-methioninium (Tyr-Met) (with W-91). His-282 serves as a coordination point for heme b. The tract at residues 361-387 (GAHQWRPKDGKGANTVPDAHDTTKRHA) is disordered.

Belongs to the peroxidase family. Peroxidase/catalase subfamily. Homodimer or homotetramer. The cofactor is heme b. Post-translationally, formation of the three residue Trp-Tyr-Met cross-link is important for the catalase, but not the peroxidase activity of the enzyme.

It catalyses the reaction H2O2 + AH2 = A + 2 H2O. It carries out the reaction 2 H2O2 = O2 + 2 H2O. In terms of biological role, bifunctional enzyme with both catalase and broad-spectrum peroxidase activity. The chain is Catalase-peroxidase from Pseudomonas entomophila (strain L48).